Reading from the N-terminus, the 29-residue chain is Inorganic pyrophosphatase (29 aa).

The protein localises to the periplasm. It carries out the reaction diphosphate + H2O = 2 phosphate + H(+). Its function is as follows. Inorganic pyrophosphatase is an essential enzyme for the activation of sulfate by sulfate reducing bacteria. This is a high activity pyrophosphatase. This Nitratidesulfovibrio vulgaris (strain ATCC 29579 / DSM 644 / CCUG 34227 / NCIMB 8303 / VKM B-1760 / Hildenborough) (Desulfovibrio vulgaris) protein is Inorganic pyrophosphatase.